The primary structure comprises 507 residues: Histidine ammonia-lyase (507 aa).

A cross-link (5-imidazolinone (Ala-Gly)) is located at residues 141–143; sequence ASG. At S142 the chain carries 2,3-didehydroalanine (Ser).

It belongs to the PAL/histidase family. In terms of processing, contains an active site 4-methylidene-imidazol-5-one (MIO), which is formed autocatalytically by cyclization and dehydration of residues Ala-Ser-Gly.

It is found in the cytoplasm. It catalyses the reaction L-histidine = trans-urocanate + NH4(+). Its pathway is amino-acid degradation; L-histidine degradation into L-glutamate; N-formimidoyl-L-glutamate from L-histidine: step 1/3. This Burkholderia pseudomallei (strain 1106a) protein is Histidine ammonia-lyase.